The chain runs to 215 residues: Riboflavin synthase (215 aa).

Lumazine-binding repeat units lie at residues 1–96 (MFTG…FGGH) and 97–193 (FVSG…YRFL). Residues 4-6 (GIV), 47-49 (CLT), 61-66 (DVMPET), 100-102 (GHV), Lys135, 144-146 (SST), and 158-163 (SVIPHT) each bind 2,4-dihydroxypteridine.

In terms of assembly, homotrimer.

The enzyme catalyses 2 6,7-dimethyl-8-(1-D-ribityl)lumazine + H(+) = 5-amino-6-(D-ribitylamino)uracil + riboflavin. It functions in the pathway cofactor biosynthesis; riboflavin biosynthesis; riboflavin from 2-hydroxy-3-oxobutyl phosphate and 5-amino-6-(D-ribitylamino)uracil: step 2/2. Its function is as follows. Catalyzes the dismutation of two molecules of 6,7-dimethyl-8-ribityllumazine, resulting in the formation of riboflavin and 5-amino-6-(D-ribitylamino)uracil. This chain is Riboflavin synthase (ribE), found in Bacillus amyloliquefaciens (Bacillus velezensis).